A 216-amino-acid polypeptide reads, in one-letter code: UPF0502 protein Spea_2482 (216 aa).

The protein belongs to the UPF0502 family.

The polypeptide is UPF0502 protein Spea_2482 (Shewanella pealeana (strain ATCC 700345 / ANG-SQ1)).